Here is a 220-residue protein sequence, read N- to C-terminus: Splicing factor U2AF 26 kDa subunit (220 aa).

Ala-2 is subject to N-acetylalanine. The segment at 12-40 adopts a C3H1-type 1 zinc-finger fold; it reads EKDKVNCSFYFKIGVCRHGDRCSRLHNKP. Residues 65 to 147 form the RRM domain; the sequence is SHCHVSDVEV…QAVHGELSPV (83 aa). The C3H1-type 2 zinc-finger motif lies at 149–176; that stretch reads DFRESCCRQYEMGECTRGGFCNFMHLRP. Positions 185-220 are disordered; it reads LYGRGPRRRSPPRFHTGHHPRERNHRCSPDHWHGRF. The span at 189–208 shows a compositional bias: basic residues; that stretch reads GPRRRSPPRFHTGHHPRERN. A compositionally biased stretch (basic and acidic residues) spans 209–220; that stretch reads HRCSPDHWHGRF.

Belongs to the splicing factor SR family. Interacts with GFI1, U2AF2 and C1QBP. In terms of tissue distribution, isoform 2 is widely expressed. Isoform 3 is highly expressed in heart, brain and lung, lower expressed in thymus and much lower expressed in peripheral blood leukocytes.

Its subcellular location is the nucleus. It localises to the nucleus speckle. The protein localises to the cytoplasm. Its function is as follows. RNA-binding protein that function as a pre-mRNA splicing factor. Plays a critical role in both constitutive and enhancer-dependent splicing by mediating protein-protein interactions and protein-RNA interactions required for accurate 3'-splice site selection. Acts by enhancing the binding of U2AF2 to weak pyrimidine tracts. Also participates in the regulation of alternative pre-mRNA splicing. Activates exon 5 skipping of PTPRC during T-cell activation; an event reversed by GFI1. Binds to RNA at the AG dinucleotide at the 3'-splice site. Shows a preference for AGC or AGA. The protein is Splicing factor U2AF 26 kDa subunit (U2AF1L4) of Homo sapiens (Human).